The chain runs to 440 residues: Adenylosuccinate lyase (440 aa).

Residues 4–5 (RY), 67–69 (KHD), and 93–94 (TS) each bind N(6)-(1,2-dicarboxyethyl)-AMP. Histidine 141 acts as the Proton donor/acceptor in catalysis. Glutamine 212 provides a ligand contact to N(6)-(1,2-dicarboxyethyl)-AMP. The active-site Proton donor/acceptor is the serine 262. N(6)-(1,2-dicarboxyethyl)-AMP-binding positions include serine 263, 268–270 (KRN), asparagine 276, and 307–311 (SVERF).

This sequence belongs to the lyase 1 family. Adenylosuccinate lyase subfamily. Homotetramer. Residues from neighboring subunits contribute catalytic and substrate-binding residues to each active site.

The catalysed reaction is N(6)-(1,2-dicarboxyethyl)-AMP = fumarate + AMP. It carries out the reaction (2S)-2-[5-amino-1-(5-phospho-beta-D-ribosyl)imidazole-4-carboxamido]succinate = 5-amino-1-(5-phospho-beta-D-ribosyl)imidazole-4-carboxamide + fumarate. It functions in the pathway purine metabolism; AMP biosynthesis via de novo pathway; AMP from IMP: step 2/2. Its pathway is purine metabolism; IMP biosynthesis via de novo pathway; 5-amino-1-(5-phospho-D-ribosyl)imidazole-4-carboxamide from 5-amino-1-(5-phospho-D-ribosyl)imidazole-4-carboxylate: step 2/2. Catalyzes two reactions in de novo purine nucleotide biosynthesis. Catalyzes the breakdown of 5-aminoimidazole- (N-succinylocarboxamide) ribotide (SAICAR or 2-[5-amino-1-(5-phospho-beta-D-ribosyl)imidazole-4-carboxamido]succinate) to 5-aminoimidazole-4-carboxamide ribotide (AICAR or 5-amino-1-(5-phospho-beta-D-ribosyl)imidazole-4-carboxamide) and fumarate, and of adenylosuccinate (ADS or N(6)-(1,2-dicarboxyethyl)-AMP) to adenosine monophosphate (AMP) and fumarate. This Helicobacter pylori (strain ATCC 700392 / 26695) (Campylobacter pylori) protein is Adenylosuccinate lyase (purB).